The following is a 339-amino-acid chain: UDP-galactose transporter homolog 1 (339 aa).

Residues 1–4 (MAGS) are Lumenal-facing. Residues 5–25 (TSSLVICAIGIYATFLTWALV) traverse the membrane as a helical segment. Residues 26 to 42 (QEPLATRTWPNSMGKFQ) are Cytoplasmic-facing. A helical membrane pass occupies residues 43–63 (FPNVISLIQASVAMMMGYLYL). Residues 64–106 (NWKKVEYPPRKMIKDHWKQLMLISFTQSSSGPLATTSLKHVDY) lie on the Lumenal side of the membrane. The helical transmembrane segment at 107-127 (LTYMLAKSCKMIPVLLVHLLL) threads the bilayer. Over 128 to 136 (YRTPIASQK) the chain is Cytoplasmic. The helical transmembrane segment at 137–157 (KVVALLVSLGVTIFTIGGNDG) threads the bilayer. Residues 158–174 (KKLKRSFNESGNDNKLQ) are Lumenal-facing. The N-linked (GlcNAc...) asparagine glycan is linked to asparagine 165. A helical transmembrane segment spans residues 175-192 (GFGLLFSSLFLDGLTNAT). Residues 193–214 (QDKLLKANKAKEKGKQTLITGA) are Cytoplasmic-facing. The helical transmembrane segment at 215-235 (HLMFTLNLFVILWNILYFIVI) threads the bilayer. The Lumenal segment spans residues 236–245 (DCKQWDNAVS). Residues 246 to 266 (VLTMDPQVWGYLMLYSFCGAM) form a helical membrane-spanning segment. Over 267–280 (GQCFIFYTLEQFGS) the chain is Cytoplasmic. A helical transmembrane segment spans residues 281 to 303 (LVLIMITVTRKMVSMILSIIVFG). The Lumenal segment spans residues 304-307 (KSVR). A helical transmembrane segment spans residues 308-327 (FQQWVGMFIVFGGITWEALN). Residues 328–339 (KKKANIPKAKSA) lie on the Cytoplasmic side of the membrane.

Belongs to the nucleotide-sugar transporter family. SLC35B subfamily.

It is found in the endoplasmic reticulum membrane. Its function is as follows. May be involved in specific transport of UDP-Gal from the cytosol to the Golgi lumen. Involved in the maintenance of optimal conditions for the folding of secretory pathway proteins in the endoplasmic reticulum. Overexpression confers resistance to the immunosuppressive drug, leflunomide. In Saccharomyces cerevisiae (strain ATCC 204508 / S288c) (Baker's yeast), this protein is UDP-galactose transporter homolog 1 (HUT1).